A 375-amino-acid chain; its full sequence is 4-hydroxy-3-methylbut-2-en-1-yl diphosphate synthase (flavodoxin) (375 aa).

[4Fe-4S] cluster contacts are provided by Cys-270, Cys-273, Cys-305, and Glu-312.

The protein belongs to the IspG family. It depends on [4Fe-4S] cluster as a cofactor.

It catalyses the reaction (2E)-4-hydroxy-3-methylbut-2-enyl diphosphate + oxidized [flavodoxin] + H2O + 2 H(+) = 2-C-methyl-D-erythritol 2,4-cyclic diphosphate + reduced [flavodoxin]. It participates in isoprenoid biosynthesis; isopentenyl diphosphate biosynthesis via DXP pathway; isopentenyl diphosphate from 1-deoxy-D-xylulose 5-phosphate: step 5/6. Functionally, converts 2C-methyl-D-erythritol 2,4-cyclodiphosphate (ME-2,4cPP) into 1-hydroxy-2-methyl-2-(E)-butenyl 4-diphosphate. The sequence is that of 4-hydroxy-3-methylbut-2-en-1-yl diphosphate synthase (flavodoxin) from Shigella flexneri serotype 5b (strain 8401).